The sequence spans 436 residues: Gamma-glutamyl phosphate reductase (436 aa).

Belongs to the gamma-glutamyl phosphate reductase family.

The protein resides in the cytoplasm. The catalysed reaction is L-glutamate 5-semialdehyde + phosphate + NADP(+) = L-glutamyl 5-phosphate + NADPH + H(+). Its pathway is amino-acid biosynthesis; L-proline biosynthesis; L-glutamate 5-semialdehyde from L-glutamate: step 2/2. Its function is as follows. Catalyzes the NADPH-dependent reduction of L-glutamate 5-phosphate into L-glutamate 5-semialdehyde and phosphate. The product spontaneously undergoes cyclization to form 1-pyrroline-5-carboxylate. This is Gamma-glutamyl phosphate reductase from Prochlorococcus marinus (strain SARG / CCMP1375 / SS120).